The primary structure comprises 82 residues: uncharacterized protein (82 aa).

A compositionally biased stretch (basic and acidic residues) spans 1–11 (MKARGSRENAS). The interval 1–25 (MKARGSRENASKRRPSQTQYDTHLR) is disordered. The span at 16 to 25 (SQTQYDTHLR) shows a compositional bias: polar residues.

This is an uncharacterized protein from Human cytomegalovirus (strain AD169) (HHV-5).